We begin with the raw amino-acid sequence, 131 residues long: Type-5 thionin (131 aa).

A signal peptide spans 1–29 (MGGGQKGLESAIVCLLVLGLVLEQVQVEG). Positions 67–131 (LASVRSSDEP…GDTLLASLDD (65 aa)) are cleaved as a propeptide — acidic domain.

This sequence belongs to the plant thionin (TC 1.C.44) family. Is disulfide-linked. In terms of tissue distribution, developing endosperm.

It localises to the secreted. In terms of biological role, thionins are small plant proteins which are toxic to animal cells. They seem to exert their toxic effect at the level of the cell membrane. Their precise function is not known. The sequence is that of Type-5 thionin (TTHV) from Triticum aestivum (Wheat).